The chain runs to 312 residues: MEKIPLIVIAGLTATGKTDVAVELAQLVNGEIVSADSMCVYKLMDIGTAKPTKEQREAVRHHVIDVVFPDEDYNVAMFQKDATNAILDIYKRGKVPLLVGGTGFYIKSVVDDIEFPEMGDSKQVRKKLFDELNNKGNMYLYELLKEIDKDAANSVHPNNVKRVIRYLEIYFLTGKKPTEFLDKVRRKGSERYNVLPLCFIMEREALWQRIDQRVEKMFDMGLADEVKMLLDMGYSKDLKSMQGLGYKQVIPYVEGKISLQEAKEELKIRTRQFAKRQRIWFKYQGEFVFLDVTGMRFEEVVKKCFELCKSVV.

ATP is bound at residue 11 to 18; sequence GLTATGKT. 13-18 provides a ligand contact to substrate; sequence TATGKT. An interaction with substrate tRNA region spans residues 36-39; it reads DSMC.

It belongs to the IPP transferase family. In terms of assembly, monomer. It depends on Mg(2+) as a cofactor.

It carries out the reaction adenosine(37) in tRNA + dimethylallyl diphosphate = N(6)-dimethylallyladenosine(37) in tRNA + diphosphate. Catalyzes the transfer of a dimethylallyl group onto the adenine at position 37 in tRNAs that read codons beginning with uridine, leading to the formation of N6-(dimethylallyl)adenosine (i(6)A). The sequence is that of tRNA dimethylallyltransferase from Caldicellulosiruptor bescii (strain ATCC BAA-1888 / DSM 6725 / KCTC 15123 / Z-1320) (Anaerocellum thermophilum).